Consider the following 155-residue polypeptide: 2-C-methyl-D-erythritol 2,4-cyclodiphosphate synthase (155 aa).

2 residues coordinate a divalent metal cation: Asp-8 and His-10. 4-CDP-2-C-methyl-D-erythritol 2-phosphate-binding positions include 8-10 (DVH) and 34-35 (HS). Residue His-42 coordinates a divalent metal cation. 4-CDP-2-C-methyl-D-erythritol 2-phosphate-binding positions include 56–58 (DIG), 61–65 (FPDSD), 132–135 (TTEE), Phe-139, and Arg-142.

It belongs to the IspF family. Homotrimer. It depends on a divalent metal cation as a cofactor.

It catalyses the reaction 4-CDP-2-C-methyl-D-erythritol 2-phosphate = 2-C-methyl-D-erythritol 2,4-cyclic diphosphate + CMP. It participates in isoprenoid biosynthesis; isopentenyl diphosphate biosynthesis via DXP pathway; isopentenyl diphosphate from 1-deoxy-D-xylulose 5-phosphate: step 4/6. Functionally, involved in the biosynthesis of isopentenyl diphosphate (IPP) and dimethylallyl diphosphate (DMAPP), two major building blocks of isoprenoid compounds. Catalyzes the conversion of 4-diphosphocytidyl-2-C-methyl-D-erythritol 2-phosphate (CDP-ME2P) to 2-C-methyl-D-erythritol 2,4-cyclodiphosphate (ME-CPP) with a corresponding release of cytidine 5-monophosphate (CMP). The chain is 2-C-methyl-D-erythritol 2,4-cyclodiphosphate synthase from Clostridium acetobutylicum (strain ATCC 824 / DSM 792 / JCM 1419 / IAM 19013 / LMG 5710 / NBRC 13948 / NRRL B-527 / VKM B-1787 / 2291 / W).